A 99-amino-acid polypeptide reads, in one-letter code: Protein IDA-LIKE 3 (99 aa).

The first 32 residues, 1–32, serve as a signal peptide directing secretion; sequence MSSRSHRSRKYQLTRTIPILVLLLVLLSCCNG. The segment covering 36–45 has biased composition (polar residues); that stretch reads TNVFNTSSPP. Disordered stretches follow at residues 36–58 and 73–99; these read TNVF…HDHV and SLPR…STKT. The span at 46–58 shows a compositional bias: basic and acidic residues; the sequence is KQKDVVSPPHDHV.

Expressed in flowers and seedlings. Detected at the base of pedicel, in the floral abscission zone and in vascular tissues.

The protein resides in the secreted. It localises to the extracellular space. Functionally, may be involved in floral abscission. This Arabidopsis thaliana (Mouse-ear cress) protein is Protein IDA-LIKE 3 (IDL3).